A 123-amino-acid chain; its full sequence is Alpha-lactalbumin (123 aa).

Residues 1 to 123 (KQFTKCELSQ…KLEQWLCEKE (123 aa)) form the C-type lysozyme domain. Disulfide bonds link Cys-6–Cys-120, Cys-28–Cys-111, Cys-61–Cys-77, and Cys-73–Cys-91. Asn-45 is a glycosylation site (N-linked (GlcNAc...) asparagine). Ca(2+)-binding residues include Lys-79, Asp-82, Asp-84, Asp-87, and Asp-88.

The protein belongs to the glycosyl hydrolase 22 family. As to quaternary structure, lactose synthase (LS) is a heterodimer of a catalytic component, beta1,4-galactosyltransferase (beta4Gal-T1) and a regulatory component, alpha-lactalbumin (LA). Mammary gland specific. Secreted in milk.

It localises to the secreted. Regulatory subunit of lactose synthase, changes the substrate specificity of galactosyltransferase in the mammary gland making glucose a good acceptor substrate for this enzyme. This enables LS to synthesize lactose, the major carbohydrate component of milk. In other tissues, galactosyltransferase transfers galactose onto the N-acetylglucosamine of the oligosaccharide chains in glycoproteins. The sequence is that of Alpha-lactalbumin (LALBA) from Papio cynocephalus (Yellow baboon).